We begin with the raw amino-acid sequence, 266 residues long: MSSRLRFLFSLAAAIAAASLLAAALRRRAPPSGLAARLVPAPMAAAAARNRSFVLWLHGLGDSGPANEPIRNFFSAPEFRLTKWAFPSAPNSPVSCNHGAVMPSWFDIHELPMSSGSPQDDSGVLKAVENVHAMIDKEVADGIPPENIFVCGFSQGGALTLASVLLYPKTLGGGAVFSGWLPFGSSVTERISPEARKTPILWSHGIADNVVLFEAGQAGPPFLQNAGFSCEFKAYPGLGHSISKEELYSLESWIKNHLKASQEKEN.

Active-site charge relay system residues include serine 154, aspartate 208, and histidine 240.

It belongs to the AB hydrolase superfamily. AB hydrolase 2 family.

In terms of biological role, possesses carboxylesterase activity in vitro. The chain is Probable carboxylesterase Os04g0669500 from Oryza sativa subsp. japonica (Rice).